The primary structure comprises 449 residues: 3-phosphoshikimate 1-carboxyvinyltransferase (449 aa).

Positions 28, 29, and 33 each coordinate 3-phosphoshikimate. K28 contacts phosphoenolpyruvate. Phosphoenolpyruvate-binding residues include G105 and R133. 3-phosphoshikimate contacts are provided by S179, Q181, D332, and K359. Q181 provides a ligand contact to phosphoenolpyruvate. D332 (proton acceptor) is an active-site residue. 2 residues coordinate phosphoenolpyruvate: R363 and R406.

The protein belongs to the EPSP synthase family. Monomer.

It localises to the cytoplasm. It catalyses the reaction 3-phosphoshikimate + phosphoenolpyruvate = 5-O-(1-carboxyvinyl)-3-phosphoshikimate + phosphate. The protein operates within metabolic intermediate biosynthesis; chorismate biosynthesis; chorismate from D-erythrose 4-phosphate and phosphoenolpyruvate: step 6/7. In terms of biological role, catalyzes the transfer of the enolpyruvyl moiety of phosphoenolpyruvate (PEP) to the 5-hydroxyl of shikimate-3-phosphate (S3P) to produce enolpyruvyl shikimate-3-phosphate and inorganic phosphate. This Nitrobacter winogradskyi (strain ATCC 25391 / DSM 10237 / CIP 104748 / NCIMB 11846 / Nb-255) protein is 3-phosphoshikimate 1-carboxyvinyltransferase.